The following is a 646-amino-acid chain: Phosphomethylpyrimidine synthase (646 aa).

Residues Asn235, Met264, Tyr293, His329, 349–351 (SRG), 390–393 (DGLR), and Glu429 each bind substrate. A Zn(2+)-binding site is contributed by His433. Tyr456 contacts substrate. Zn(2+) is bound at residue His497. Cys577, Cys580, and Cys585 together coordinate [4Fe-4S] cluster.

It belongs to the ThiC family. In terms of assembly, homodimer. It depends on [4Fe-4S] cluster as a cofactor.

It carries out the reaction 5-amino-1-(5-phospho-beta-D-ribosyl)imidazole + S-adenosyl-L-methionine = 4-amino-2-methyl-5-(phosphooxymethyl)pyrimidine + CO + 5'-deoxyadenosine + formate + L-methionine + 3 H(+). The protein operates within cofactor biosynthesis; thiamine diphosphate biosynthesis. Catalyzes the synthesis of the hydroxymethylpyrimidine phosphate (HMP-P) moiety of thiamine from aminoimidazole ribotide (AIR) in a radical S-adenosyl-L-methionine (SAM)-dependent reaction. This chain is Phosphomethylpyrimidine synthase, found in Vibrio campbellii (strain ATCC BAA-1116).